The sequence spans 477 residues: Tyrosine--tRNA ligase, mitochondrial (477 aa).

A mitochondrion-targeting transit peptide spans 1-16 (MAAPILRSFSWGRWSG). Tyrosine 77 contributes to the L-tyrosine binding site. Aspartate 81 contacts ATP. Residues 82-91 (PTADSLHVGH) carry the 'HIGH' region motif. L-tyrosine-binding residues include aspartate 121, tyrosine 221, glutamine 225, and aspartate 228. 244 to 246 (GSD) contributes to the ATP binding site. Residue glutamine 247 participates in L-tyrosine binding. Residues isoleucine 274 and lysine 284 each contribute to the ATP site. The 'KMSKS' region motif lies at 281–285 (KLGKS). An N6-acetyllysine mark is found at lysine 355 and lysine 367.

The protein belongs to the class-I aminoacyl-tRNA synthetase family. As to quaternary structure, homodimer.

The protein localises to the mitochondrion matrix. It carries out the reaction tRNA(Tyr) + L-tyrosine + ATP = L-tyrosyl-tRNA(Tyr) + AMP + diphosphate + H(+). Functionally, catalyzes the attachment of tyrosine to tRNA(Tyr) in a two-step reaction: tyrosine is first activated by ATP to form Tyr-AMP and then transferred to the acceptor end of tRNA(Tyr). In Homo sapiens (Human), this protein is Tyrosine--tRNA ligase, mitochondrial (YARS2).